The following is a 338-amino-acid chain: DNA-directed RNA polymerase subunit alpha (338 aa).

Positions 1–234 (MIHKNWAELI…DQLSIFVNFE (234 aa)) are alpha N-terminal domain (alpha-NTD). An alpha C-terminal domain (alpha-CTD) region spans residues 250–338 (FNPLLLKKVD…DLAKRFEDQF (89 aa)).

Belongs to the RNA polymerase alpha chain family. As to quaternary structure, homodimer. The RNAP catalytic core consists of 2 alpha, 1 beta, 1 beta' and 1 omega subunit. When a sigma factor is associated with the core the holoenzyme is formed, which can initiate transcription.

The catalysed reaction is RNA(n) + a ribonucleoside 5'-triphosphate = RNA(n+1) + diphosphate. DNA-dependent RNA polymerase catalyzes the transcription of DNA into RNA using the four ribonucleoside triphosphates as substrates. The protein is DNA-directed RNA polymerase subunit alpha of Cereibacter sphaeroides (strain ATCC 17025 / ATH 2.4.3) (Rhodobacter sphaeroides).